Consider the following 381-residue polypeptide: L-lactate dehydrogenase (381 aa).

Residues methionine 1–lysine 380 enclose the FMN hydroxy acid dehydrogenase domain. Tyrosine 24 provides a ligand contact to substrate. Positions 106 and 127 each coordinate FMN. Tyrosine 129 contacts substrate. Threonine 155 provides a ligand contact to FMN. Arginine 164 serves as a coordination point for substrate. Lysine 251 provides a ligand contact to FMN. Histidine 275 acts as the Proton acceptor in catalysis. Substrate is bound at residue arginine 278. Aspartate 306–arginine 330 contributes to the FMN binding site.

It belongs to the FMN-dependent alpha-hydroxy acid dehydrogenase family. It depends on FMN as a cofactor.

The protein localises to the cell inner membrane. It carries out the reaction (S)-lactate + A = pyruvate + AH2. Its function is as follows. Catalyzes the conversion of L-lactate to pyruvate. Is coupled to the respiratory chain. The polypeptide is L-lactate dehydrogenase (Haemophilus influenzae (strain ATCC 51907 / DSM 11121 / KW20 / Rd)).